We begin with the raw amino-acid sequence, 744 residues long: NAD(P)H-quinone oxidoreductase subunit 5, chloroplastic (744 aa).

The next 16 helical transmembrane spans lie at 9–29 (WIIP…LLFF), 40–60 (WVFP…DLSI), 89–109 (IDSL…LVLI), 125–145 (FTYL…SNLI), 147–167 (VYIF…FWFT), 185–205 (GDFG…SLEF), 219–239 (NEVN…GSVA), 258–278 (TPIS…FLVA), 280–300 (LLPL…IGII), 327–347 (LGYM…FHLI), 354–374 (ALLF…VGYS), 396–416 (NAFL…CFWS), 425–445 (WLYS…TAFY), 552–572 (LFSM…GISF), 612–632 (FSVS…KPVF), and 724–744 (ISSY…SIFI).

Belongs to the complex I subunit 5 family. As to quaternary structure, NDH is composed of at least 16 different subunits, 5 of which are encoded in the nucleus.

The protein resides in the plastid. Its subcellular location is the chloroplast thylakoid membrane. It carries out the reaction a plastoquinone + NADH + (n+1) H(+)(in) = a plastoquinol + NAD(+) + n H(+)(out). The enzyme catalyses a plastoquinone + NADPH + (n+1) H(+)(in) = a plastoquinol + NADP(+) + n H(+)(out). NDH shuttles electrons from NAD(P)H:plastoquinone, via FMN and iron-sulfur (Fe-S) centers, to quinones in the photosynthetic chain and possibly in a chloroplast respiratory chain. The immediate electron acceptor for the enzyme in this species is believed to be plastoquinone. Couples the redox reaction to proton translocation, and thus conserves the redox energy in a proton gradient. The protein is NAD(P)H-quinone oxidoreductase subunit 5, chloroplastic (ndhF) of Cicer arietinum (Chickpea).